The following is a 95-amino-acid chain: Small ribosomal subunit protein bS6 (95 aa).

Belongs to the bacterial ribosomal protein bS6 family.

Functionally, binds together with bS18 to 16S ribosomal RNA. The protein is Small ribosomal subunit protein bS6 of Clostridium beijerinckii (strain ATCC 51743 / NCIMB 8052) (Clostridium acetobutylicum).